Here is a 79-residue protein sequence, read N- to C-terminus: MSRLGIMVLTLLLLVFIVTSHQDAGEKQATKRAAVNFRWRRSFTRRAAAEECEEYCEEEEKTCCGEEDGEPVCAEFCLG.

The signal sequence occupies residues 1 to 20 (MSRLGIMVLTLLLLVFIVTS). Positions 21–44 (HQDAGEKQATKRAAVNFRWRRSFT) are excised as a propeptide. 3 cysteine pairs are disulfide-bonded: C52–C64, C56–C73, and C63–C77. L78 is subject to Leucine amide.

The protein belongs to the conotoxin O3 superfamily. As to expression, expressed by the venom duct.

The protein localises to the secreted. The polypeptide is Conotoxin ArMSGL-0123 (Conus arenatus (Sand-dusted cone)).